The sequence spans 615 residues: Chaperone protein HscA homolog (615 aa).

The protein belongs to the heat shock protein 70 family.

Functionally, chaperone involved in the maturation of iron-sulfur cluster-containing proteins. Has a low intrinsic ATPase activity which is markedly stimulated by HscB. The sequence is that of Chaperone protein HscA homolog from Aeromonas salmonicida (strain A449).